Consider the following 717-residue polypeptide: UvrABC system protein C (717 aa).

The 80-residue stretch at 16 to 95 (DSPGVYKFRD…IKEFDPRFNV (80 aa)) folds into the GIY-YIG domain. Residues 208–243 (GTYIRRLEKDMMQAAEEMEYERAARLRDDAEALKRA) form the UVR domain. The disordered stretch occupies residues 467 to 548 (ERTGEWEEAP…PREDDGRPKR (82 aa)). The segment covering 477-522 (EAAPGSASVHASATGPAATGQATAGPAAMGQAAAGPVSTGPAATGP) has biased composition (low complexity).

This sequence belongs to the UvrC family. As to quaternary structure, interacts with UvrB in an incision complex.

The protein localises to the cytoplasm. Its function is as follows. The UvrABC repair system catalyzes the recognition and processing of DNA lesions. UvrC both incises the 5' and 3' sides of the lesion. The N-terminal half is responsible for the 3' incision and the C-terminal half is responsible for the 5' incision. The chain is UvrABC system protein C from Streptomyces griseus subsp. griseus (strain JCM 4626 / CBS 651.72 / NBRC 13350 / KCC S-0626 / ISP 5235).